The primary structure comprises 367 residues: Peptide chain release factor 2 (367 aa).

N5-methylglutamine is present on glutamine 249.

This sequence belongs to the prokaryotic/mitochondrial release factor family. Methylated by PrmC. Methylation increases the termination efficiency of RF2.

The protein resides in the cytoplasm. Peptide chain release factor 2 directs the termination of translation in response to the peptide chain termination codons UGA and UAA. This is Peptide chain release factor 2 from Pseudothermotoga lettingae (strain ATCC BAA-301 / DSM 14385 / NBRC 107922 / TMO) (Thermotoga lettingae).